The chain runs to 589 residues: Probable arginine--tRNA ligase, cytoplasmic (589 aa).

Residues 121–123 (SPN), His132, Tyr332, Asp336, and Gln360 each bind L-arginine. The 'HIGH' region motif lies at 121–132 (SPNIAKPFHAGH). An interaction with tRNA region spans residues 469 to 483 (DTGPYLQYAHARLCS).

It belongs to the class-I aminoacyl-tRNA synthetase family.

It localises to the cytoplasm. The protein localises to the cytosol. It catalyses the reaction tRNA(Arg) + L-arginine + ATP = L-arginyl-tRNA(Arg) + AMP + diphosphate. Forms part of a macromolecular complex that catalyzes the attachment of specific amino acids to cognate tRNAs during protein synthesis. The chain is Probable arginine--tRNA ligase, cytoplasmic (argS1) from Dictyostelium discoideum (Social amoeba).